The chain runs to 171 residues: Ribosome maturation factor RimM (171 aa).

A PRC barrel domain is found at 97-169; that stretch reads DGEFYYHEII…RVDVSIMEGL (73 aa).

The protein belongs to the RimM family. As to quaternary structure, binds ribosomal protein uS19.

It localises to the cytoplasm. Functionally, an accessory protein needed during the final step in the assembly of 30S ribosomal subunit, possibly for assembly of the head region. Essential for efficient processing of 16S rRNA. May be needed both before and after RbfA during the maturation of 16S rRNA. It has affinity for free ribosomal 30S subunits but not for 70S ribosomes. This is Ribosome maturation factor RimM from Lactococcus lactis subsp. lactis (strain IL1403) (Streptococcus lactis).